A 324-amino-acid chain; its full sequence is Lipid droplet-associated hydrolase (324 aa).

The active-site Nucleophile is serine 136. Catalysis depends on charge relay system residues aspartate 270 and histidine 299.

This sequence belongs to the AB hydrolase superfamily. LDAH family.

The protein localises to the lipid droplet. It localises to the endoplasmic reticulum. The catalysed reaction is a cholesterol ester + H2O = cholesterol + a fatty acid + H(+). Probable serine lipid hydrolase associated with lipid droplets. Has low cholesterol esterase activity. Appears to lack triglyceride lipase activity. Involved in cholesterol and triglyceride homeostasis; stimulates cellular triglyceride accumulation and cellular cholesterol release. In Gallus gallus (Chicken), this protein is Lipid droplet-associated hydrolase.